A 291-amino-acid polypeptide reads, in one-letter code: MLQGSLVALITPMNQDGSIHYDQLRQLIDWHIENGTDGIVAAGTTGESATLSVEEHLSVIEETVKHVAKRVPVIAGTGANNTVEAIALSQAAEKAGADYTLSVVPYYNKPSQEGMYRHFKAVAEAAAIPMILYNVPGRTVVSMNNETILRLAEIPNIVGVKEASGNVGSNIELINRAPEGFAVLSGDDHTALPFMLCGGHGVITVAANAAPKLFADMCRAALQGDIALARELNDRLIPIYDTMFCEPSPAAPKWAVSALGRCGPHVRLPLVPLTEGGQAKVRAALKASGQL.

Thr45 contacts pyruvate. The active-site Proton donor/acceptor is the Tyr133. The Schiff-base intermediate with substrate role is filled by Lys161. Residue Ile203 participates in pyruvate binding.

This sequence belongs to the DapA family. In terms of assembly, homotetramer; dimer of dimers.

The protein resides in the cytoplasm. It carries out the reaction L-aspartate 4-semialdehyde + pyruvate = (2S,4S)-4-hydroxy-2,3,4,5-tetrahydrodipicolinate + H2O + H(+). The protein operates within amino-acid biosynthesis; L-lysine biosynthesis via DAP pathway; (S)-tetrahydrodipicolinate from L-aspartate: step 3/4. Its function is as follows. Catalyzes the condensation of (S)-aspartate-beta-semialdehyde [(S)-ASA] and pyruvate to 4-hydroxy-tetrahydrodipicolinate (HTPA). This is 4-hydroxy-tetrahydrodipicolinate synthase from Neisseria gonorrhoeae (strain ATCC 700825 / FA 1090).